The sequence spans 378 residues: Putative F-box protein At4g17565 (378 aa).

Positions 16–63 constitute an F-box domain; the sequence is PKWSELCPDLLRSIFEQLSFTNLNRAKLVCRSWNSASRGCVPKRNQIP.

This is Putative F-box protein At4g17565 from Arabidopsis thaliana (Mouse-ear cress).